The sequence spans 325 residues: UPF0285 protein MmarC5_0962 (325 aa).

It belongs to the UPF0285 family.

This chain is UPF0285 protein MmarC5_0962, found in Methanococcus maripaludis (strain C5 / ATCC BAA-1333).